We begin with the raw amino-acid sequence, 1170 residues long: Cellulose synthase-like protein D2 (1170 aa).

Disordered regions lie at residues 1 to 48 (MASS…RRTH), 54 to 73 (SYSR…MSPE), and 269 to 295 (NEVD…EFTS). Low complexity predominate over residues 10-24 (RHSNSSRLSRMSYSG). Residues 273 to 288 (NGGGGGGGGGLGGGDG) show a composition bias toward gly residues. 2 helical membrane passes run 311–331 (VLSP…LFLA) and 341–361 (AMWL…SWLL). Residue D441 is part of the active site. Residues 527–551 (HAREEIKAMKRQREAALDDVVEAVK) adopt a coiled-coil conformation. The active site involves D873. The next 6 membrane-spanning stretches (helical) occupy residues 955 to 975 (IFLI…QFIV), 981 to 1001 (TFLT…VLEI), 1027 to 1047 (LAAV…SFTL), 1070 to 1090 (SLMI…AVGF), 1104 to 1124 (LLGG…FAKG), and 1134 to 1154 (TIVF…WVAI).

This sequence belongs to the glycosyltransferase 2 family. Plant cellulose synthase-like D subfamily.

It is found in the golgi apparatus membrane. In terms of biological role, thought to be a Golgi-localized beta-glycan synthase that polymerize the backbones of noncellulosic polysaccharides (hemicelluloses) of plant cell wall. The sequence is that of Cellulose synthase-like protein D2 (CSLD2) from Oryza sativa subsp. japonica (Rice).